The primary structure comprises 827 residues: SH3-containing GRB2-like protein 3-interacting protein 1 (827 aa).

3 disordered regions span residues M1–K115, S142–L205, and I223–T278. 2 stretches are compositionally biased toward basic and acidic residues: residues R16–G32 and P40–K54. S78, S104, S105, S107, S149, S151, S156, and S169 each carry phosphoserine. T180 and T182 each carry phosphothreonine. Phosphoserine is present on S236. Positions T245–P260 are enriched in pro residues. Phosphothreonine occurs at positions 247 and 259. Residues S265, S287, S289, S300, S316, and S319 each carry the phosphoserine modification. Over residues S265–A276 the composition is skewed to polar residues. A compositionally biased stretch (basic and acidic residues) spans H314–V333. Residues H314–E523 form a disordered region. Phosphothreonine is present on residues T324, T328, and T335. Residues P336–D345 show a composition bias toward low complexity. Residues S346–V369 are compositionally biased toward pro residues. Residue S371 is modified to Phosphoserine. Residues E377 to Y392 are compositionally biased toward basic and acidic residues. Residue S398 is modified to Phosphoserine. Position 409 is a phosphothreonine (T409). A compositionally biased stretch (low complexity) spans A436–T455. Residues T456 to K474 show a composition bias toward pro residues. 2 stretches are compositionally biased toward low complexity: residues S481–S491 and P498–T521. The residue at position 485 (S485) is a Phosphoserine. The MHD domain maps to T558–D826. Interaction with DPF motifs-containing proteins stretches follow at residues P560 to T566, S592 to P594, T666 to N669, and S812 to R817. Positions M648–N827 are necessary and sufficient to mediate interaction with CANX.

As to quaternary structure, interacts with proteins essential or regulating the formation of functional clathrin-coated pits. Interacts with CANX. Interacts with AP2A1. Interacts with EPS15. Interacts with SH3GL3. Interacts with AMPH. Interacts with ITSN1 (via SH3 domains). Interacts with and REPS1. Specifically expressed in brain (at protein level).

Its subcellular location is the membrane. The protein localises to the clathrin-coated pit. Functionally, may function in clathrin-mediated endocytosis. Has both a membrane binding/tubulating activity and the ability to recruit proteins essential to the formation of functional clathrin-coated pits. Has a preference for membranes enriched in phosphatidylserine and phosphoinositides and is required for the endocytosis of the transferrin receptor. May also bind tubulin. May play a role in the regulation of energy homeostasis. This Rattus norvegicus (Rat) protein is SH3-containing GRB2-like protein 3-interacting protein 1 (Sgip1).